The primary structure comprises 150 residues: UPF0506 protein SJCHGC09643 (150 aa).

The signal sequence occupies residues 1–18 (MNTCIQLLILCLVTVINS). N-linked (GlcNAc...) asparagine glycans are attached at residues asparagine 20, asparagine 32, asparagine 48, and asparagine 110. Intrachain disulfides connect cysteine 116–cysteine 130, cysteine 123–cysteine 134, and cysteine 129–cysteine 139.

Belongs to the UPF0506 family.

The protein localises to the secreted. This Schistosoma japonicum (Blood fluke) protein is UPF0506 protein SJCHGC09643.